The primary structure comprises 573 residues: MANAEVSVPVGDVVVVPTEGNEGENPEDTKTQVILQLQPVQQGLFIDGHFYNRIYEAGSENNTAVVAVETHTIHKIEEGIDTGTIEANEDMEIAYPITCGESKAILLWKKFVCPGINVKCVKFNDQLISPKHFVHLAGKSTLKDWKRAIRLGGIMLRKMMDSGQIDFYQHDKVCSNTCRSTKFDLLISSARAPVPGQQTSVVQTPTSADGSITQIAISEESMEEAGLEWNSALTAAVTMATEEGVKKDSEEISEDTLMFWKGIADVGLMEEVVCNIQKEIEELLRGVQQRLIQAPFQVTDAAVLNNVAHTFGLMDTVKKVLDNRRNQVEQGEEQFLYTLTDLERQLEEQKKQGQDHRLKSQTVQNVVLMPVSTPKPPKRPRLQRPASTTVLSPSPPVQQPQFTVISPITITPVGQSFSMGNIPVATLSQGSSPVTVHTLPSGPQLFRYATVVSSAKSSSPDTVTIHPSSSLALLSSTAMQDGSTLGNMTTMVSPVELVAMESGLTSAIQAVESTSEDGQTIIEIDPAPDPEAEDTEGKAVILETELRTEEKVVAEMEEHQHQVHNVEIVVLED.

At A2 the chain carries N-acetylalanine. Residues 82 to 166 (TGTIEANEDM…RKMMDSGQID (85 aa)) form the SAND domain. C113 is a binding site for Zn(2+). The DNA site is built by K139, K143, K146, and R157. H170, C174, and C178 together coordinate Zn(2+). Residues 321–367 (LDNRRNQVEQGEEQFLYTLTDLERQLEEQKKQGQDHRLKSQTVQNVV) adopt a coiled-coil conformation. The tract at residues 370-398 (PVSTPKPPKRPRLQRPASTTVLSPSPPVQ) is disordered.

As to quaternary structure, homodimer, and heterodimer of GMEB1 and GMEB2. GMEB1 and GMEB2 form the parvovirus initiator complex (PIF). Interacts with the glucocorticoid receptor (NR3C1) and NCOA2/TIF2. May interact with HSP27 and CREB-binding protein (CBP).

The protein resides in the nucleus. It is found in the cytoplasm. Functionally, trans-acting factor that binds to glucocorticoid modulatory elements (GME) present in the TAT (tyrosine aminotransferase) promoter and increases sensitivity to low concentrations of glucocorticoids. Also binds to the transferrin receptor promoter. Essential auxiliary factor for the replication of parvoviruses. In Homo sapiens (Human), this protein is Glucocorticoid modulatory element-binding protein 1 (GMEB1).